We begin with the raw amino-acid sequence, 465 residues long: Sensor histidine kinase ZraS (465 aa).

Topologically, residues 1-14 (MRFMQRSKDSLAKW) are cytoplasmic. Residues 15 to 35 (LSAILPVVIVGLVGLFAVTVI) traverse the membrane as a helical segment. Over 36–201 (RDYGRASEAD…ATQSGEKRNT (166 aa)) the chain is Periplasmic. Residues 202-222 (LIILFALATVLLASVLSFFWY) form a helical membrane-spanning segment. The Cytoplasmic portion of the chain corresponds to 223 to 465 (RRYLRSRQLL…VNITRKDPQG (243 aa)). Residues 251-458 (GVAHEIRNPL…TFTLWLPVNI (208 aa)) enclose the Histidine kinase domain. His-254 carries the post-translational modification Phosphohistidine; by autocatalysis.

In terms of processing, autophosphorylated.

The protein localises to the cell inner membrane. It catalyses the reaction ATP + protein L-histidine = ADP + protein N-phospho-L-histidine.. Activity of the ZraS/ZraR two-component system is repressed by the zinc-bound form of ZraP, which probably interacts with the periplasmic region of ZraS. Part of the Zra signaling pathway, an envelope stress response (ESR) system composed of the periplasmic accessory protein ZraP, the histidine kinase ZraS and the transcriptional regulator ZraR. The ZraPSR system contributes to antibiotic resistance and is important for membrane integrity in the presence of membrane-targeting biocides. ZraS is a member of the two-component regulatory system ZraS/ZraR. Functions as a membrane-associated sensor kinase that phosphorylates ZraR in response to high concentrations of Zn(2+) or Pb(2+) in the medium. Binds one zinc molecule with high affinity via its periplasmic domain, inducing a conformational change that is transmitted to the histidine kinase domain and leads to the activation of ZraR. The system has no direct role in zinc or copper resistance. The sequence is that of Sensor histidine kinase ZraS from Escherichia coli (strain K12).